Here is a 182-residue protein sequence, read N- to C-terminus: Dirigent protein 1 (182 aa).

Positions 1-24 (MAKRFLLLLPLLSSILLLAVSVTA) are cleaved as a signal peptide. A glycan (N-linked (GlcNAc...) asparagine) is linked at asparagine 125.

The protein belongs to the plant dirigent protein family. In terms of assembly, homodimer.

The protein resides in the secreted. It localises to the extracellular space. Its subcellular location is the apoplast. Functionally, dirigent proteins impart stereoselectivity on the phenoxy radical-coupling reaction, yielding optically active lignans from two molecules of coniferyl alcohol in the biosynthesis of lignans, flavonolignans, and alkaloids and thus plays a central role in plant secondary metabolism. The protein is Dirigent protein 1 (DIR1) of Arabidopsis thaliana (Mouse-ear cress).